The chain runs to 424 residues: Putative pachytene checkpoint protein 2 (424 aa).

179–186 (GPPGTGKT) contributes to the ATP binding site.

Belongs to the AAA ATPase family. PCH2 subfamily.

Its function is as follows. Plays a key role in chromosome recombination during meiosis. The protein is Putative pachytene checkpoint protein 2 (pch-2) of Caenorhabditis elegans.